We begin with the raw amino-acid sequence, 349 residues long: MPILKQLVSSSVNSKRRSRADLTAEMISAPLGDFRHTMHVGRAGDAFGDTSFLTSKAREADDESLDEQASASKLSLLSRKFRGSKRSQSVTRGDREQRDMLGSLRDSALFVKNAMSLPQLNEKEAAEKDSSKLPKSLSSSPVKKADARDGGPKSPHRNGATGPHSPDPLLDEQAFGDLMDLPIMPKVSYGLKHAESILSFHIDLGPSMLGDVLSIMDKDQWGSEEEEEAGGYRDKEGPSSIVQAPPVLEVVPPLGRQESKASWDQASMLPPHAVEDDGWAVVAPSPSSARSVGSHTTRDSSSLSSYTSGVLEERSPAFRGPDRVAAAPPRQPDKEFCFMDEEEEDEIRV.

An N6-methyllysine modification is found at lysine 5. A Phosphoserine modification is found at serine 18. The CRIB domain occupies 27–41; it reads ISAPLGDFRHTMHVG. Serine 64, serine 103, serine 107, and serine 116 each carry phosphoserine. Basic and acidic residues predominate over residues 123–132; the sequence is KEAAEKDSSK. 3 disordered regions span residues 123-172, 220-240, and 278-349; these read KEAA…LLDE, QWGS…GPSS, and GWAV…EIRV. Phosphoserine occurs at positions 136, 138, 140, 154, 165, 223, 285, and 288. Residues 280-308 show a composition bias toward low complexity; the sequence is AVVAPSPSSARSVGSHTTRDSSSLSSYTS. A compositionally biased stretch (basic and acidic residues) spans 311-322; sequence LEERSPAFRGPD. The segment covering 338 to 349 has biased composition (acidic residues); that stretch reads FMDEEEEDEIRV.

Belongs to the BORG/CEP family. As to quaternary structure, interacts with CDC42 and RHOQ, in a GTP-dependent manner. As to expression, ubiquitous.

It localises to the endomembrane system. Its subcellular location is the cytoplasm. The protein resides in the cytoskeleton. Probably involved in the organization of the actin cytoskeleton. May act downstream of CDC42 to induce actin filament assembly leading to cell shape changes. Induces pseudopodia formation, when overexpressed in fibroblasts. This chain is Cdc42 effector protein 4 (Cdc42ep4), found in Mus musculus (Mouse).